Here is a 150-residue protein sequence, read N- to C-terminus: Ribosome maturation factor RimP (150 aa).

It belongs to the RimP family.

The protein resides in the cytoplasm. Required for maturation of 30S ribosomal subunits. The sequence is that of Ribosome maturation factor RimP from Francisella tularensis subsp. holarctica (strain LVS).